Here is a 129-residue protein sequence, read N- to C-terminus: Small ribosomal subunit protein uS11 (129 aa).

It belongs to the universal ribosomal protein uS11 family. As to quaternary structure, part of the 30S ribosomal subunit. Interacts with proteins S7 and S18. Binds to IF-3.

In terms of biological role, located on the platform of the 30S subunit, it bridges several disparate RNA helices of the 16S rRNA. Forms part of the Shine-Dalgarno cleft in the 70S ribosome. The chain is Small ribosomal subunit protein uS11 from Lactobacillus gasseri (strain ATCC 33323 / DSM 20243 / BCRC 14619 / CIP 102991 / JCM 1131 / KCTC 3163 / NCIMB 11718 / NCTC 13722 / AM63).